We begin with the raw amino-acid sequence, 346 residues long: UDP-N-acetylenolpyruvoylglucosamine reductase (346 aa).

The 172-residue stretch at 23-194 folds into the FAD-binding PCMH-type domain; the sequence is FDVRAQFACR…TSVTFRLPKV (172 aa). The active site involves arginine 170. Serine 246 (proton donor) is an active-site residue. Residue glutamate 342 is part of the active site.

Belongs to the MurB family. FAD serves as cofactor.

It is found in the cytoplasm. The enzyme catalyses UDP-N-acetyl-alpha-D-muramate + NADP(+) = UDP-N-acetyl-3-O-(1-carboxyvinyl)-alpha-D-glucosamine + NADPH + H(+). The protein operates within cell wall biogenesis; peptidoglycan biosynthesis. In terms of biological role, cell wall formation. This Paraburkholderia phytofirmans (strain DSM 17436 / LMG 22146 / PsJN) (Burkholderia phytofirmans) protein is UDP-N-acetylenolpyruvoylglucosamine reductase.